The primary structure comprises 616 residues: Chaperone protein HscA (616 aa).

It belongs to the heat shock protein 70 family.

Functionally, chaperone involved in the maturation of iron-sulfur cluster-containing proteins. Has a low intrinsic ATPase activity which is markedly stimulated by HscB. Involved in the maturation of IscU. The sequence is that of Chaperone protein HscA from Escherichia coli (strain SMS-3-5 / SECEC).